Reading from the N-terminus, the 333-residue chain is Holliday junction branch migration complex subunit RuvB (333 aa).

The interval Met-1–Tyr-181 is large ATPase domain (RuvB-L). Residues Leu-20, Arg-21, Gly-62, Lys-65, Thr-66, Thr-67, Glu-128–Phe-130, Arg-171, Tyr-181, and Arg-218 contribute to the ATP site. Mg(2+) is bound at residue Thr-66. The tract at residues Gln-182–Asp-252 is small ATPAse domain (RuvB-S). The head domain (RuvB-H) stretch occupies residues Gln-255–His-333. 4 residues coordinate DNA: Arg-291, Arg-310, Arg-312, and Arg-315.

Belongs to the RuvB family. Homohexamer. Forms an RuvA(8)-RuvB(12)-Holliday junction (HJ) complex. HJ DNA is sandwiched between 2 RuvA tetramers; dsDNA enters through RuvA and exits via RuvB. An RuvB hexamer assembles on each DNA strand where it exits the tetramer. Each RuvB hexamer is contacted by two RuvA subunits (via domain III) on 2 adjacent RuvB subunits; this complex drives branch migration. In the full resolvosome a probable DNA-RuvA(4)-RuvB(12)-RuvC(2) complex forms which resolves the HJ.

The protein localises to the cytoplasm. It carries out the reaction ATP + H2O = ADP + phosphate + H(+). In terms of biological role, the RuvA-RuvB-RuvC complex processes Holliday junction (HJ) DNA during genetic recombination and DNA repair, while the RuvA-RuvB complex plays an important role in the rescue of blocked DNA replication forks via replication fork reversal (RFR). RuvA specifically binds to HJ cruciform DNA, conferring on it an open structure. The RuvB hexamer acts as an ATP-dependent pump, pulling dsDNA into and through the RuvAB complex. RuvB forms 2 homohexamers on either side of HJ DNA bound by 1 or 2 RuvA tetramers; 4 subunits per hexamer contact DNA at a time. Coordinated motions by a converter formed by DNA-disengaged RuvB subunits stimulates ATP hydrolysis and nucleotide exchange. Immobilization of the converter enables RuvB to convert the ATP-contained energy into a lever motion, pulling 2 nucleotides of DNA out of the RuvA tetramer per ATP hydrolyzed, thus driving DNA branch migration. The RuvB motors rotate together with the DNA substrate, which together with the progressing nucleotide cycle form the mechanistic basis for DNA recombination by continuous HJ branch migration. Branch migration allows RuvC to scan DNA until it finds its consensus sequence, where it cleaves and resolves cruciform DNA. The sequence is that of Holliday junction branch migration complex subunit RuvB from Streptococcus equi subsp. zooepidemicus (strain MGCS10565).